Here is a 460-residue protein sequence, read N- to C-terminus: ATP synthase subunit beta (460 aa).

150-157 (GGAGVGKT) serves as a coordination point for ATP.

This sequence belongs to the ATPase alpha/beta chains family. F-type ATPases have 2 components, CF(1) - the catalytic core - and CF(0) - the membrane proton channel. CF(1) has five subunits: alpha(3), beta(3), gamma(1), delta(1), epsilon(1). CF(0) has three main subunits: a(1), b(2) and c(9-12). The alpha and beta chains form an alternating ring which encloses part of the gamma chain. CF(1) is attached to CF(0) by a central stalk formed by the gamma and epsilon chains, while a peripheral stalk is formed by the delta and b chains.

It localises to the cell inner membrane. It carries out the reaction ATP + H2O + 4 H(+)(in) = ADP + phosphate + 5 H(+)(out). Functionally, produces ATP from ADP in the presence of a proton gradient across the membrane. The catalytic sites are hosted primarily by the beta subunits. This is ATP synthase subunit beta from Shigella dysenteriae serotype 1 (strain Sd197).